A 319-amino-acid polypeptide reads, in one-letter code: Methionyl-tRNA formyltransferase (319 aa).

Residue 113 to 116 coordinates (6S)-5,6,7,8-tetrahydrofolate; sequence SLLP.

Belongs to the Fmt family.

The catalysed reaction is L-methionyl-tRNA(fMet) + (6R)-10-formyltetrahydrofolate = N-formyl-L-methionyl-tRNA(fMet) + (6S)-5,6,7,8-tetrahydrofolate + H(+). Its function is as follows. Attaches a formyl group to the free amino group of methionyl-tRNA(fMet). The formyl group appears to play a dual role in the initiator identity of N-formylmethionyl-tRNA by promoting its recognition by IF2 and preventing the misappropriation of this tRNA by the elongation apparatus. The polypeptide is Methionyl-tRNA formyltransferase (Hamiltonella defensa subsp. Acyrthosiphon pisum (strain 5AT)).